Consider the following 446-residue polypeptide: Maltoporin (446 aa).

Positions 1 to 25 (MMITLRKLPLAVAVAAGVMSAQAMA) are cleaved as a signal peptide.

This sequence belongs to the porin LamB (TC 1.B.3) family. In terms of assembly, homotrimer formed of three 18-stranded antiparallel beta-barrels, containing three independent channels.

It localises to the cell outer membrane. The catalysed reaction is beta-maltose(in) = beta-maltose(out). Involved in the transport of maltose and maltodextrins. The protein is Maltoporin of Escherichia coli O8 (strain IAI1).